Reading from the N-terminus, the 24-residue chain is Neurotoxin 5 (24 aa).

The LCN-type CS-alpha/beta domain maps to 2 to 24 (RDAYIAQNYNCVYTCFKNDYCND).

This sequence belongs to the long (4 C-C) scorpion toxin superfamily. Sodium channel inhibitor family. Alpha subfamily. As to expression, expressed by the venom gland.

The protein resides in the secreted. Binds to sodium channels (Nav) and inhibits the inactivation of the activated channels, thereby blocking neuronal transmission. This is Neurotoxin 5 from Buthus occitanus tunetanus (Common European scorpion).